Consider the following 269-residue polypeptide: MKLNRAIGVIDSGVGGLTVAKELIRQLPKERIIYLGDTARCPYGPRSREEVRQFTWEMTEHLLDLNIKMLVIACNTATAVVLEEMQKQLPIPVVGVIHPGSRTALKMTNTYHVGIIGTIGTVKSGAYEEALKSINNRVMVESLACPPFVELVESGNFESEMAYEVVRETLQPLKNTDIDTLILGCTHYPILGPVIKQVMGDKVQLISSGDETAREVSTILYHSKMLNEGEEQSDHLFLTTGKIGLFKEIASKWFGQPIENVKHIYLEKE.

Substrate-binding positions include 11–12 and 43–44; these read DS and YG. C74 (proton donor/acceptor) is an active-site residue. 75–76 contributes to the substrate binding site; it reads NT. C185 serves as the catalytic Proton donor/acceptor. 186 to 187 is a substrate binding site; the sequence is TH.

It belongs to the aspartate/glutamate racemases family.

It carries out the reaction L-glutamate = D-glutamate. It functions in the pathway cell wall biogenesis; peptidoglycan biosynthesis. Its function is as follows. Provides the (R)-glutamate required for cell wall biosynthesis. This is Glutamate racemase from Bacillus cereus (strain ATCC 10987 / NRS 248).